The primary structure comprises 376 residues: MYLKTLHLRHFRNYYDQKVEFTAAKTILVGNNAQGKSNLLEAVELLATLRSHRMARDRDLVQEEEPLAQINATLERDTGVSDLSLILRRNGRRTVALNGESLRRQMDFLGVLNAVQFSSLDLELVRGSPEVRRNWLDTLLIQLEPVYAHILQQYNQVLRQRNAYLKKLQDSALTTQDSALAIWDAQLVTTGTKVIRRRDRALARLAPLATAWHTSISGSTEVLQISYTPNVQLMQNQPEQVQQAFLSQLQQRAVPEMYRGTTLVGPHRDEVELTINQTPARQYGSQGQQRTLVLALKLAELQLIEEVVKEPPLLLLDDVLAELDPSRQNQLLDTIQDRFQTLITTTHLSSFDAQWLNSSQILFVEQGKISTSNSIR.

30-37 (GNNAQGKS) is a binding site for ATP.

The protein belongs to the RecF family.

Its subcellular location is the cytoplasm. The RecF protein is involved in DNA metabolism; it is required for DNA replication and normal SOS inducibility. RecF binds preferentially to single-stranded, linear DNA. It also seems to bind ATP. In Trichormus variabilis (strain ATCC 29413 / PCC 7937) (Anabaena variabilis), this protein is DNA replication and repair protein RecF.